The chain runs to 259 residues: Thiazole synthase (259 aa).

Residue lysine 98 is the Schiff-base intermediate with DXP of the active site. 1-deoxy-D-xylulose 5-phosphate-binding positions include glycine 159, 185–186, and 207–208; these read AG and NS.

This sequence belongs to the ThiG family. As to quaternary structure, homotetramer. Forms heterodimers with either ThiH or ThiS.

Its subcellular location is the cytoplasm. It catalyses the reaction [ThiS sulfur-carrier protein]-C-terminal-Gly-aminoethanethioate + 2-iminoacetate + 1-deoxy-D-xylulose 5-phosphate = [ThiS sulfur-carrier protein]-C-terminal Gly-Gly + 2-[(2R,5Z)-2-carboxy-4-methylthiazol-5(2H)-ylidene]ethyl phosphate + 2 H2O + H(+). The protein operates within cofactor biosynthesis; thiamine diphosphate biosynthesis. Catalyzes the rearrangement of 1-deoxy-D-xylulose 5-phosphate (DXP) to produce the thiazole phosphate moiety of thiamine. Sulfur is provided by the thiocarboxylate moiety of the carrier protein ThiS. In vitro, sulfur can be provided by H(2)S. The sequence is that of Thiazole synthase from Chlorobium phaeobacteroides (strain DSM 266 / SMG 266 / 2430).